A 376-amino-acid chain; its full sequence is Arf-GAP with dual PH domain-containing protein 2 (376 aa).

The Arf-GAP domain maps to 9–130 (KRLLELLQAA…EFMAEKAVSP (122 aa)). A C4-type zinc finger spans residues 25–48 (CADCGAADPDWASYKLGVFICLHC). PH domains follow at residues 131–232 (PGDR…AARL) and 254–360 (NYLK…GVLS).

As to expression, expressed in many tissues, with highest levels in fat, heart and skeletal muscle. Also detected in kidney, liver and lung.

It is found in the cytoplasm. The protein resides in the cell membrane. In terms of biological role, GTPase-activating protein for the ADP ribosylation factor family (Potential). Binds phosphatidylinositol 4,5-bisphosphate, phosphatidylinositol 3,4,5-trisphosphate (PtdInsP3) and inositol 1,3,4,5-tetrakisphosphate (InsP4). Binding of phosphatidylinositol 3,5-bisphosphate and phosphatidylinositol 3,4-bisphosphate occurs at a much lower affinity. Possesses a stoichiometry of two binding sites for InsP4 with identical affinity. This is Arf-GAP with dual PH domain-containing protein 2 (Adap2) from Rattus norvegicus (Rat).